The sequence spans 933 residues: Potassium voltage-gated channel subfamily KQT member 5 (933 aa).

Residues 1-126 (MPRHHAGGEE…YNVLERPRGW (126 aa)) are Cytoplasmic-facing. A Phosphoserine modification is found at Ser89. The chain crosses the membrane as a helical span at residues 127–147 (AFVYHAFVFLLVFGCLILSVF). Topologically, residues 148 to 157 (STIPEHTKLA) are extracellular. A helical membrane pass occupies residues 158–178 (SSCLLILEFVMIVVFGLEFII). Residues 179 to 201 (RIWSAGCCCRYRGWQGRLRFARK) are Cytoplasmic-facing. Residues 202–222 (PFCVIDTIVLIASIAVVSAKT) traverse the membrane as a helical segment. Topologically, residues 223 to 230 (QGNIFATS) are extracellular. The chain crosses the membrane as a helical; Voltage-sensor span at residues 231–253 (ALRSLRFLQILRMVRMDRRGGTW). 2 residues coordinate a 1,2-diacyl-sn-glycero-3-phospho-(1D-myo-inositol-4,5-bisphosphate): Arg249 and Lys265. The Cytoplasmic portion of the chain corresponds to 254-267 (KLLGSVVYAHSKEL). A helical transmembrane segment spans residues 268-288 (ITAWYIGFLVLIFSSFLVYLV). Residues 289–299 (EKDANKEFSTY) lie on the Extracellular side of the membrane. An intramembrane region (pore-forming) is located at residues 300–320 (ADALWWGTITLTTIGYGDKTP). At 321–326 (LTWLGR) the chain is on the extracellular side. The chain crosses the membrane as a helical span at residues 327 to 347 (LLSAGFALLGISFFALPAGIL). Over 348-933 (GSGFALKVQE…ALSLPHVKLN (586 aa)) the chain is Cytoplasmic. Position 362 (Lys362) interacts with a 1,2-diacyl-sn-glycero-3-phospho-(1D-myo-inositol-4,5-bisphosphate). Residues 371 to 379 (AANLIQCVW) form an interaction with CALM region. The disordered stretch occupies residues 405 to 465 (SPTKKEQGEA…EGSPTKVQKS (61 aa)). The span at 432–441 (RGQSIKSRQA) shows a compositional bias: polar residues. Ser448 is modified (phosphoserine). The interaction with CALM stretch occupies residues 522–529 (VIRAIRIM). The segment at 578–598 (KGQMTSDKKSREKITAEHETT) is disordered. A compositionally biased stretch (basic and acidic residues) spans 583-598 (SDKKSREKITAEHETT). A Phosphoserine modification is found at Ser832. The tract at residues 878-933 (GAEETETDTFDGTPPPAGEAAFSSDSLRTGRSRSSQNICKTGDSTDALSLPHVKLN) is disordered. A compositionally biased stretch (polar residues) spans 900 to 924 (SSDSLRTGRSRSSQNICKTGDSTDA).

It belongs to the potassium channel family. KQT (TC 1.A.1.15) subfamily. Kv7.5/KCNQ5 sub-subfamily. As to quaternary structure, homotetramer; forms a functional homotetrameric channel resulting in the expression of a small M-current. Heterotetramer with KCNQ3; forms heterotetrameric M-channel responsible for the native M-current. Heterotetramer with KCNQ1; forms a functional voltage-gated potassium channel. Interacts (via C-terminus) with calmodulin/CALM; forms a heterooctameric structure (with 4:4 KCNQ1:CALM stoichiometry); the interaction is calcium-independent, constitutive and participates in the channel function. Strongly expressed in brain. Also expressed in colon, lung and uterus.

The protein localises to the cell membrane. The catalysed reaction is K(+)(in) = K(+)(out). With respect to regulation, phosphatidylinositol-4,5-bisphosphate (PIP2) is essential to activate KCNQ5 channel by inducing the coupling of the voltage-sensing domain (VSD) and the pore-forming domain (PD). Calcium suppresses KCNQ5 channel current through calcium-bound CALM C-terminus. Therefore CALM acts as calcium sensor that controls channel activity. Zinc potentiates channel activity in a pH-dependent manner. The activity is modulated by small changes in cell volume. Activated by the anticonvulsant retigabine. Inhibited by linopirdine and XE991. Pore-forming subunit of the voltage-gated potassium (Kv) channel broadly expressed in brain and skeletal muscle and involved in the regulation of neuronal excitability. Associates with KCNQ3/Kv7.3 pore-forming subunit to form a potassium channel which contributes to M-type current, a slowly activating and deactivating potassium conductance which plays a critical role in determining the subthreshold electrical excitability of neurons. Contributes, with other potassium channels, to the molecular diversity of a heterogeneous population of M-channels, varying in kinetic and pharmacological properties, which underlie this physiologically important current. Also forms a functional channel with KCNQ1/Kv7.1 subunit that may contribute to vasoconstriction and hypertension. Channel may be selectively permeable in vitro to other cations besides potassium, in decreasing order of affinity K(+) = Rb(+) &gt; Cs(+) &gt; Na(+). This is Potassium voltage-gated channel subfamily KQT member 5 from Mus musculus (Mouse).